A 1712-amino-acid polypeptide reads, in one-letter code: Latent-transforming growth factor beta-binding protein 1 (1712 aa).

The signal sequence occupies residues 1–20; it reads MAGAWLRWGLLLWAGLLAWS. Residues 63–148 are disordered; sequence SSTATSSRSL…QDTQSSGGSR (86 aa). Residues 136-147 show a composition bias toward polar residues; the sequence is KVQQDTQSSGGS. Residues 181–213 form the EGF-like 1 domain; it reads TKPSCVPPCQNGGMCLRPQFCVCKPGTKGKACE. 3 cysteine pairs are disulfide-bonded: cysteine 185-cysteine 195, cysteine 189-cysteine 201, and cysteine 203-cysteine 212. N-linked (GlcNAc...) asparagine glycans are attached at residues asparagine 339 and asparagine 370. One can recognise an EGF-like 2 domain in the interval 391 to 423; sequence RVVICHLPCMNGGQCSSRDKCQCPPNFTGKLCQ. 6 disulfides stabilise this stretch: cysteine 395–cysteine 405, cysteine 399–cysteine 411, cysteine 413–cysteine 422, cysteine 551–cysteine 573, cysteine 560–cysteine 586, and cysteine 574–cysteine 589. Asparagine 416 carries N-linked (GlcNAc...) asparagine glycosylation. Residues 549–601 form the TB 1 domain; that stretch reads GRCFQETIGSQCGKALPGLSKQEDCCGTVGTSWGFNKCQKCPKKQSYHGYTQM. Asparagine 612 carries N-linked (GlcNAc...) asparagine glycosylation. Residues 618–658 enclose the EGF-like 3; calcium-binding domain; sequence DINECQLQGVCPNGECLNTMGSYRCSCKMGFGPDPTFSSCV. 7 disulfides stabilise this stretch: cysteine 622-cysteine 633, cysteine 628-cysteine 642, cysteine 644-cysteine 657, cysteine 671-cysteine 694, cysteine 681-cysteine 706, cysteine 695-cysteine 709, and cysteine 696-cysteine 721. The O-linked (Glc) serine glycan is linked to serine 639. The 53-residue stretch at 669–721 folds into the TB 2 domain; it reads GPCYRLVSPGRQCMHPLSVHLTKQICCCSVGKAWGPQCEKCPLPGTAAFKEIC. Residues 752–803 form a disordered region; that stretch reads KNTQPVAKSTHPPPLPAKEEPVEALTSSREHGPGVAEPEVVTAPPEKEIPSL. O-linked (GalNAc...) threonine glycans are attached at residues threonine 761 and threonine 793. The region spanning 865-906 is the EGF-like 4; calcium-binding domain; sequence EINECTVNPDICGAGHCINLPVRYTCICYEGYKFSEQQRKCI. Cystine bridges form between cysteine 869/cysteine 881, cysteine 876/cysteine 890, cysteine 892/cysteine 905, cysteine 911/cysteine 923, cysteine 918/cysteine 932, cysteine 934/cysteine 947, cysteine 953/cysteine 964, cysteine 959/cysteine 973, cysteine 976/cysteine 988, cysteine 994/cysteine 1005, cysteine 1000/cysteine 1014, cysteine 1017/cysteine 1028, cysteine 1034/cysteine 1045, cysteine 1040/cysteine 1054, cysteine 1056/cysteine 1069, cysteine 1075/cysteine 1086, cysteine 1081/cysteine 1095, cysteine 1097/cysteine 1110, cysteine 1116/cysteine 1127, cysteine 1122/cysteine 1136, cysteine 1138/cysteine 1151, cysteine 1157/cysteine 1169, cysteine 1164/cysteine 1178, cysteine 1180/cysteine 1192, cysteine 1198/cysteine 1210, cysteine 1204/cysteine 1219, cysteine 1221/cysteine 1234, cysteine 1240/cysteine 1252, cysteine 1246/cysteine 1261, cysteine 1263/cysteine 1276, cysteine 1282/cysteine 1294, cysteine 1289/cysteine 1303, cysteine 1305/cysteine 1319, cysteine 1340/cysteine 1363, cysteine 1350/cysteine 1375, cysteine 1364/cysteine 1380, and cysteine 1365/cysteine 1392. One can recognise an EGF-like 5; calcium-binding domain in the interval 907–948; the sequence is DIDECAQAQHLCSQGRCENTEGSFLCICPAGFIASEEGSNCI. Residue serine 929 is glycosylated (O-linked (Glc) serine). Residues 949-989 form the EGF-like 6; calcium-binding domain; it reads DVDECLRPDVCRDGRCINTAGAFRCEYCDSGYRMSRRGHCE. Asparagine 966 carries the post-translational modification (3R)-3-hydroxyasparagine. Residues 990 to 1029 enclose the EGF-like 7; calcium-binding domain; that stretch reads DIDECLTPSTCPEEQCVNSPGSYQCVPCTEGFRGWNGQCL. O-linked (Glc) serine glycosylation occurs at serine 1011. One can recognise an EGF-like 8; calcium-binding domain in the interval 1030-1070; the sequence is DVDECLQPKVCTNGSCTNLEGSYMCSCHKGYSPTPDHRHCQ. The N-linked (GlcNAc...) asparagine glycan is linked to asparagine 1042. Serine 1051 is a glycosylation site (O-linked (Glc) serine). Residues 1071–1111 enclose the EGF-like 9; calcium-binding domain; sequence DIDECQQGNLCMNGQCKNTDGSFRCTCGQGYQLSAAKDQCE. An EGF-like 10; calcium-binding domain is found at 1112–1152; the sequence is DIDECEHRHLCSHGQCRNTEGSFQCLCNQGYRASVLGDHCE. The residue at position 1129 (asparagine 1129) is a (3R)-3-hydroxyasparagine. Residue serine 1133 is glycosylated (O-linked (Glc) serine). The region spanning 1153-1193 is the EGF-like 11; calcium-binding domain; that stretch reads DINECLEDSSVCQGGDCINTAGSYDCTCPDGLQLNDNKGCQ. Residues 1194-1235 form the EGF-like 12; calcium-binding domain; the sequence is DINECAQPGLCAPHGECLNTQGSFHCVCEQGFSISADGRTCE. O-linked (Glc) serine glycosylation is present at serine 1216. The region spanning 1236 to 1277 is the EGF-like 13; calcium-binding domain; it reads DIDECVNNTVCDSHGFCDNTAGSFRCLCYQGFQAPQDGQGCV. Residue asparagine 1242 is glycosylated (N-linked (GlcNAc...) asparagine). The EGF-like 14; calcium-binding domain maps to 1278-1320; the sequence is DVNECELLSGVCGEAFCENVEGSFLCVCADENQEYSPMTGQCR. Residues 1335 to 1402 form an 8-Cys3 region region; that stretch reads EEKKECYYNL…PRGKGFVPAG (68 aa). Residues 1338–1392 form the TB 3 domain; it reads KECYYNLNDASLCDNVLAPNVTKQECCCTSGAGWGDNCEIFPCPVQGTAEFSEMC. Asparagine 1357 carries N-linked (GlcNAc...) asparagine glycosylation. Serine 1405 carries the post-translational modification Phosphoserine. One can recognise an EGF-like 15; calcium-binding domain in the interval 1415 to 1457; sequence DADECLLFGEEICKNGYCLNTQPGYECYCKEGTYYDPVKLQCF. 10 disulfide bridges follow: cysteine 1419-cysteine 1432, cysteine 1427-cysteine 1441, cysteine 1443-cysteine 1456, cysteine 1462-cysteine 1473, cysteine 1468-cysteine 1482, cysteine 1484-cysteine 1497, cysteine 1517-cysteine 1541, cysteine 1527-cysteine 1553, cysteine 1542-cysteine 1556, and cysteine 1543-cysteine 1568. The 41-residue stretch at 1458–1498 folds into the EGF-like 16; calcium-binding domain; that stretch reads DMDECQDPNSCIDGQCVNTEGSYNCFCTHPMVLDASEKRCV. An O-linked (Glc) serine glycan is attached at serine 1479. Residues 1498–1712 form a C-terminal domain region; the sequence is VQPTESNEQI…LNLDKDSDLE (215 aa). Positions 1515-1568 constitute a TB 4 domain; that stretch reads DLCWEHLSEEYVCSRPLVGKQTTYTECCCLYGEAWGMQCALCPMKDSDDYAQLC. Residues serine 1588 and serine 1607 each carry the phosphoserine modification. Positions 1612–1652 constitute an EGF-like 17 domain; it reads QAEECGILNGCENGRCVRVQEGYTCDCFDGYHLDMAKMTCV. 6 disulfide bridges follow: cysteine 1616/cysteine 1627, cysteine 1622/cysteine 1636, cysteine 1638/cysteine 1651, cysteine 1657/cysteine 1672, cysteine 1667/cysteine 1681, and cysteine 1683/cysteine 1696. The EGF-like 18; calcium-binding domain occupies 1653 to 1697; that stretch reads DVNECSELNNRMSLCKNAKCINTEGSYKCVCLPGYVPSDKPNYCT. O-linked (Glc) serine glycosylation occurs at serine 1678.

The protein belongs to the LTBP family. As to quaternary structure, interacts with TGFB1; associates via disulfide bonds with the Latency-associated peptide chain (LAP) regulatory chain of TGFB1, leading to regulate activation of TGF-beta-1. LTBP1 does not bind directly to TGF-beta-1, the active chain of TGFB1. Interacts (via C-terminal domain) with FBN1 (via N-terminal domain). Interacts with FBN2. Interacts with ADAMTSL2. Interacts with EFEMP2. Post-translationally, contains hydroxylated asparagine residues. Two intrachain disulfide bonds from the TB3 domain are rearranged upon TGFB1 binding, and form interchain bonds with TGFB1 propeptide, anchoring it to the extracellular matrix. In terms of processing, O-glycosylated on serine residues by POGLUT2 and POGLUT3.

The protein localises to the secreted. It is found in the extracellular space. It localises to the extracellular matrix. Key regulator of transforming growth factor beta (TGFB1, TGFB2 and TGFB3) that controls TGF-beta activation by maintaining it in a latent state during storage in extracellular space. Associates specifically via disulfide bonds with the Latency-associated peptide (LAP), which is the regulatory chain of TGF-beta, and regulates integrin-dependent activation of TGF-beta. Outcompeted by LRRC32/GARP for binding to LAP regulatory chain of TGF-beta. In Rattus norvegicus (Rat), this protein is Latent-transforming growth factor beta-binding protein 1 (Ltbp1).